Here is a 334-residue protein sequence, read N- to C-terminus: Holliday junction branch migration complex subunit RuvB (334 aa).

The interval 1–182 is large ATPase domain (RuvB-L); that stretch reads MDDRMVDQSM…FGVHLRLEYY (182 aa). ATP contacts are provided by residues Leu-21, Arg-22, Gly-63, Lys-66, Thr-67, Thr-68, 129-131, Arg-172, Tyr-182, and Arg-219; that span reads EDF. Thr-67 contacts Mg(2+). The small ATPAse domain (RuvB-S) stretch occupies residues 183 to 253; sequence QELELKEIIV…TTRASLQLLQ (71 aa). The tract at residues 256–334 is head domain (RuvB-H); the sequence is DEGLDYIDHK…HFSKKNGKKE (79 aa). The DNA site is built by Arg-292, Arg-311, and Arg-316.

It belongs to the RuvB family. Homohexamer. Forms an RuvA(8)-RuvB(12)-Holliday junction (HJ) complex. HJ DNA is sandwiched between 2 RuvA tetramers; dsDNA enters through RuvA and exits via RuvB. An RuvB hexamer assembles on each DNA strand where it exits the tetramer. Each RuvB hexamer is contacted by two RuvA subunits (via domain III) on 2 adjacent RuvB subunits; this complex drives branch migration. In the full resolvosome a probable DNA-RuvA(4)-RuvB(12)-RuvC(2) complex forms which resolves the HJ.

The protein localises to the cytoplasm. The catalysed reaction is ATP + H2O = ADP + phosphate + H(+). Functionally, the RuvA-RuvB-RuvC complex processes Holliday junction (HJ) DNA during genetic recombination and DNA repair, while the RuvA-RuvB complex plays an important role in the rescue of blocked DNA replication forks via replication fork reversal (RFR). RuvA specifically binds to HJ cruciform DNA, conferring on it an open structure. The RuvB hexamer acts as an ATP-dependent pump, pulling dsDNA into and through the RuvAB complex. RuvB forms 2 homohexamers on either side of HJ DNA bound by 1 or 2 RuvA tetramers; 4 subunits per hexamer contact DNA at a time. Coordinated motions by a converter formed by DNA-disengaged RuvB subunits stimulates ATP hydrolysis and nucleotide exchange. Immobilization of the converter enables RuvB to convert the ATP-contained energy into a lever motion, pulling 2 nucleotides of DNA out of the RuvA tetramer per ATP hydrolyzed, thus driving DNA branch migration. The RuvB motors rotate together with the DNA substrate, which together with the progressing nucleotide cycle form the mechanistic basis for DNA recombination by continuous HJ branch migration. Branch migration allows RuvC to scan DNA until it finds its consensus sequence, where it cleaves and resolves cruciform DNA. The sequence is that of Holliday junction branch migration complex subunit RuvB from Staphylococcus saprophyticus subsp. saprophyticus (strain ATCC 15305 / DSM 20229 / NCIMB 8711 / NCTC 7292 / S-41).